The primary structure comprises 79 residues: Protein B6 (79 aa).

The protein is Protein B6 (B6) of Human herpesvirus 6B (strain Z29) (HHV-6 variant B).